The chain runs to 163 residues: Large ribosomal subunit protein uL10 (163 aa).

It belongs to the universal ribosomal protein uL10 family. Part of the ribosomal stalk of the 50S ribosomal subunit. The N-terminus interacts with L11 and the large rRNA to form the base of the stalk. The C-terminus forms an elongated spine to which L12 dimers bind in a sequential fashion forming a multimeric L10(L12)X complex.

Functionally, forms part of the ribosomal stalk, playing a central role in the interaction of the ribosome with GTP-bound translation factors. The chain is Large ribosomal subunit protein uL10 from Histophilus somni (strain 129Pt) (Haemophilus somnus).